Here is a 353-residue protein sequence, read N- to C-terminus: GTPase Obg (353 aa).

One can recognise an Obg domain in the interval 1 to 159 (MKFLDEAKVY…RWIWLRLKLI (159 aa)). The OBG-type G domain maps to 160 to 327 (ADAGLVGLPN…ALRALVAVIG (168 aa)). GTP is bound by residues 166–173 (GLPNAGKS), 191–195 (FTTLH), 212–215 (DIPG), 279–282 (NKID), and 308–310 (SGV). Mg(2+) is bound by residues S173 and T193.

This sequence belongs to the TRAFAC class OBG-HflX-like GTPase superfamily. OBG GTPase family. In terms of assembly, monomer. Mg(2+) serves as cofactor.

Its subcellular location is the cytoplasm. Functionally, an essential GTPase which binds GTP, GDP and possibly (p)ppGpp with moderate affinity, with high nucleotide exchange rates and a fairly low GTP hydrolysis rate. Plays a role in control of the cell cycle, stress response, ribosome biogenesis and in those bacteria that undergo differentiation, in morphogenesis control. In Rhodopseudomonas palustris (strain ATCC BAA-98 / CGA009), this protein is GTPase Obg.